Reading from the N-terminus, the 930-residue chain is Protein translocase subunit SecA (930 aa).

Residues glutamine 83, 101 to 105 (GEGKT), and aspartate 491 each bind ATP.

It belongs to the SecA family. In terms of assembly, monomer and homodimer. Part of the essential Sec protein translocation apparatus which comprises SecA, SecYEG and auxiliary proteins SecDF. Other proteins may also be involved.

The protein resides in the cell inner membrane. Its subcellular location is the cellular thylakoid membrane. It localises to the cytoplasm. It catalyses the reaction ATP + H2O + cellular proteinSide 1 = ADP + phosphate + cellular proteinSide 2.. Functionally, part of the Sec protein translocase complex. Interacts with the SecYEG preprotein conducting channel. Has a central role in coupling the hydrolysis of ATP to the transfer of proteins into and across the cell membrane, serving as an ATP-driven molecular motor driving the stepwise translocation of polypeptide chains across the membrane. Probably participates in protein translocation into and across both the cytoplasmic and thylakoid membranes in cyanobacterial cells. This is Protein translocase subunit SecA from Trichormus variabilis (strain ATCC 29413 / PCC 7937) (Anabaena variabilis).